The primary structure comprises 419 residues: Glutamyl-tRNA reductase (419 aa).

Substrate is bound by residues 49 to 52 (TCNR), Ser107, 112 to 114 (EPQ), and Gln118. The active-site Nucleophile is the Cys50. 187–192 (GAGETI) contacts NADP(+).

Belongs to the glutamyl-tRNA reductase family. In terms of assembly, homodimer.

It catalyses the reaction (S)-4-amino-5-oxopentanoate + tRNA(Glu) + NADP(+) = L-glutamyl-tRNA(Glu) + NADPH + H(+). Its pathway is porphyrin-containing compound metabolism; protoporphyrin-IX biosynthesis; 5-aminolevulinate from L-glutamyl-tRNA(Glu): step 1/2. Catalyzes the NADPH-dependent reduction of glutamyl-tRNA(Glu) to glutamate 1-semialdehyde (GSA). In Vibrio atlanticus (strain LGP32) (Vibrio splendidus (strain Mel32)), this protein is Glutamyl-tRNA reductase.